The chain runs to 321 residues: Glucokinase (321 aa).

10 to 15 (GDIGGT) provides a ligand contact to ATP.

The protein belongs to the bacterial glucokinase family.

Its subcellular location is the cytoplasm. The enzyme catalyses D-glucose + ATP = D-glucose 6-phosphate + ADP + H(+). This is Glucokinase from Marinobacter nauticus (strain ATCC 700491 / DSM 11845 / VT8) (Marinobacter aquaeolei).